The following is a 270-amino-acid chain: Formamidopyrimidine-DNA glycosylase (270 aa).

The active-site Schiff-base intermediate with DNA is P2. E3 acts as the Proton donor in catalysis. The active-site Proton donor; for beta-elimination activity is the K58. DNA is bound by residues H91, R110, and R151. The FPG-type zinc-finger motif lies at 236-270 (FVYGRGGQPCKVCGTALREVKLGQRASVYCPRCQR). Catalysis depends on R260, which acts as the Proton donor; for delta-elimination activity.

The protein belongs to the FPG family. In terms of assembly, monomer. Zn(2+) serves as cofactor.

The enzyme catalyses Hydrolysis of DNA containing ring-opened 7-methylguanine residues, releasing 2,6-diamino-4-hydroxy-5-(N-methyl)formamidopyrimidine.. It carries out the reaction 2'-deoxyribonucleotide-(2'-deoxyribose 5'-phosphate)-2'-deoxyribonucleotide-DNA = a 3'-end 2'-deoxyribonucleotide-(2,3-dehydro-2,3-deoxyribose 5'-phosphate)-DNA + a 5'-end 5'-phospho-2'-deoxyribonucleoside-DNA + H(+). Its function is as follows. Involved in base excision repair of DNA damaged by oxidation or by mutagenic agents. Acts as a DNA glycosylase that recognizes and removes damaged bases. Has a preference for oxidized purines, such as 7,8-dihydro-8-oxoguanine (8-oxoG). Has AP (apurinic/apyrimidinic) lyase activity and introduces nicks in the DNA strand. Cleaves the DNA backbone by beta-delta elimination to generate a single-strand break at the site of the removed base with both 3'- and 5'-phosphates. The protein is Formamidopyrimidine-DNA glycosylase of Pseudomonas putida (strain GB-1).